The chain runs to 376 residues: Pregnancy-associated glycoprotein 2 (376 aa).

A signal peptide spans 1 to 15; it reads MKWLVLLGLVALSEC. N51 and N71 each carry an N-linked (GlcNAc...) asparagine glycan. The region spanning 68 to 373 is the Peptidase A1 domain; sequence YVGNITIGTP…DRKNRRIGLA (306 aa). D86 is an active-site residue. A disulfide bond links C99 and C104. N114, N248, and N252 each carry an N-linked (GlcNAc...) asparagine glycan. An intrachain disulfide couples C258 to C262. D267 is a catalytic residue. A disulfide bridge connects residues C300 and C333. N343 is a glycosylation site (N-linked (GlcNAc...) asparagine).

Belongs to the peptidase A1 family. In terms of processing, N-Glycosylated; the glycans terminate in either N-acetyl-galactosamine (GalNAc) or N-acetyllactosamine. Terminal GalNAc on Asn-linked glycans is greatly reduced prior to parturition while lactosamine-type N-glycans remain unaltered. As to expression, trophoblast and placental tissue. Localized to both the mononucleate and binucleate cells of the trophectoderm.

Its subcellular location is the secreted. The protein resides in the extracellular space. Functionally, PAG2 or a processed derivative of this molecule might represent a factor that binds the LH receptor. In Bos taurus (Bovine), this protein is Pregnancy-associated glycoprotein 2 (PAG2).